The following is a 95-amino-acid chain: Small ribosomal subunit protein bS18 (95 aa).

Belongs to the bacterial ribosomal protein bS18 family. In terms of assembly, part of the 30S ribosomal subunit. Forms a tight heterodimer with protein bS6.

Functionally, binds as a heterodimer with protein bS6 to the central domain of the 16S rRNA, where it helps stabilize the platform of the 30S subunit. In Rickettsia massiliae (strain Mtu5), this protein is Small ribosomal subunit protein bS18.